A 364-amino-acid polypeptide reads, in one-letter code: D-alanine--D-alanine ligase (364 aa).

An ATP-grasp domain is found at 134-344 (KVLLKSFNIP…YESLVDKLIT (211 aa)). 167–222 (NNKLNYPVIVKPSVLGSSIGINVAYNVSQIEKYIEEAFEYDLTVVVEKFIKAREIE) contributes to the ATP binding site. Positions 297, 311, and 313 each coordinate Mg(2+).

This sequence belongs to the D-alanine--D-alanine ligase family. Mg(2+) serves as cofactor. Mn(2+) is required as a cofactor.

Its subcellular location is the cytoplasm. It carries out the reaction 2 D-alanine + ATP = D-alanyl-D-alanine + ADP + phosphate + H(+). The protein operates within cell wall biogenesis; peptidoglycan biosynthesis. Cell wall formation. This chain is D-alanine--D-alanine ligase, found in Borrelia recurrentis (strain A1).